Here is a 240-residue protein sequence, read N- to C-terminus: Orotidine 5'-phosphate decarboxylase (240 aa).

Substrate is bound by residues aspartate 15, lysine 37, 64–73, threonine 125, arginine 186, glutamine 195, glycine 215, and arginine 216; that span reads DLKYHDIPNT. Lysine 66 (proton donor) is an active-site residue.

It belongs to the OMP decarboxylase family. Type 1 subfamily. As to quaternary structure, homodimer.

It carries out the reaction orotidine 5'-phosphate + H(+) = UMP + CO2. It functions in the pathway pyrimidine metabolism; UMP biosynthesis via de novo pathway; UMP from orotate: step 2/2. In terms of biological role, catalyzes the decarboxylation of orotidine 5'-monophosphate (OMP) to uridine 5'-monophosphate (UMP). In Pelobacter propionicus (strain DSM 2379 / NBRC 103807 / OttBd1), this protein is Orotidine 5'-phosphate decarboxylase.